An 853-amino-acid chain; its full sequence is NADH-quinone oxidoreductase subunit G 2 (853 aa).

The region spanning 1–78 (MIKVTIDEQS…GMVVRTNTPL (78 aa)) is the 2Fe-2S ferredoxin-type domain. [2Fe-2S] cluster contacts are provided by Cys34, Cys45, Cys48, and Cys62. Residues 78-117 (LIEETRSSMLDMLLANHPLDCPICDKGGECELQDMVMAYG) form the 4Fe-4S His(Cys)3-ligated-type domain. [4Fe-4S] cluster contacts are provided by His94, Cys98, Cys101, Cys107, Cys148, Cys151, Cys154, Cys198, Cys224, Cys227, Cys231, and Cys259. 2 4Fe-4S ferredoxin-type domains span residues 139 to 170 (PVII…LGTV) and 179 to 209 (TGFE…FPYR). The 57-residue stretch at 217-273 (LAETDTICPHCGTGCQLTVGARKGEFMRVRSDWEHGVNRETLCVRGRFGLDFIESRD) folds into the 4Fe-4S Mo/W bis-MGD-type domain.

Belongs to the complex I 75 kDa subunit family. Requires [2Fe-2S] cluster as cofactor. The cofactor is [4Fe-4S] cluster.

The enzyme catalyses a quinone + NADH + 5 H(+)(in) = a quinol + NAD(+) + 4 H(+)(out). In terms of biological role, NDH-1 shuttles electrons from NADH, via FMN and iron-sulfur (Fe-S) centers, to quinones in the respiratory chain. The immediate electron acceptor for the enzyme in this species is believed to be ubiquinone. Couples the redox reaction to proton translocation (for every two electrons transferred, four hydrogen ions are translocated across the cytoplasmic membrane), and thus conserves the redox energy in a proton gradient. This chain is NADH-quinone oxidoreductase subunit G 2 (nuoG2), found in Rhizobium meliloti (strain 1021) (Ensifer meliloti).